Reading from the N-terminus, the 500-residue chain is Probable E3 ubiquitin-protein ligase ARI16 (500 aa).

The interval 74–288 (NSNSSSADRE…QGNWNCSPVA (215 aa)) is TRIAD supradomain. The RING-type 1 zinc finger occupies 78–130 (SSADRETGDGDYLVSTPFCSHKFSTTCWSEYLSDALKKNKEQRGLISCLSQDC). Cys-96, His-98, Cys-125, Cys-130, Cys-169, Cys-174, Cys-194, Cys-196, Cys-201, Cys-204, His-209, Cys-214, Cys-241, Cys-244, Cys-261, Cys-263, Cys-268, Cys-271, His-278, and Cys-284 together coordinate Zn(2+). The IBR-type zinc-finger motif lies at 148–214 (EMYENYILES…GLESHRPVSC (67 aa)). The RING-type 2; atypical zinc finger occupies 241 to 271 (CPKCKIPVQQNGDPNYRLINCICSNNFCWIC). The RanBP2-type zinc-finger motif lies at 453–483 (EPGSRWFCDRCTFENSWVDKQCKMCFFPLDY).

It belongs to the RBR family. Ariadne subfamily. It depends on Zn(2+) as a cofactor. Preferentially expressed in green siliques.

It carries out the reaction [E2 ubiquitin-conjugating enzyme]-S-ubiquitinyl-L-cysteine + [acceptor protein]-L-lysine = [E2 ubiquitin-conjugating enzyme]-L-cysteine + [acceptor protein]-N(6)-ubiquitinyl-L-lysine.. It participates in protein modification; protein ubiquitination. Its function is as follows. Might act as an E3 ubiquitin-protein ligase, or as part of E3 complex, which accepts ubiquitin from specific E2 ubiquitin-conjugating enzymes and then transfers it to substrates. In Arabidopsis thaliana (Mouse-ear cress), this protein is Probable E3 ubiquitin-protein ligase ARI16 (ARI16).